We begin with the raw amino-acid sequence, 701 residues long: Acetyl-coenzyme A synthetase, cytoplasmic (701 aa).

Over residues 1–26 (MGLPEERRKSGSGSRAREETGAEGRV) the composition is skewed to basic and acidic residues. Residues 1 to 37 (MGLPEERRKSGSGSRAREETGAEGRVRGWSPPPEVRR) form a disordered region. An interaction with TFEB region spans residues 1–107 (MGLPEERRKS…GATTNICYNV (107 aa)). At Ser-30 the chain carries Phosphoserine. 219-222 (RGEK) lines the CoA pocket. Phosphoserine is present on residues Ser-263, Ser-265, and Ser-267. Thr-363 serves as a coordination point for CoA. Lys-418 carries the post-translational modification N6-acetyllysine. Residues 439 to 441 (GEP), 463 to 468 (DTFWQT), Asp-552, and Arg-567 each bind ATP. CoA contacts are provided by Ser-575 and Arg-636. The short motif at 656 to 668 (KTRSGKIMRRVLR) is the Nuclear localization signal element. At Ser-659 the chain carries Phosphoserine; by AMPK. An N6-acetyllysine modification is found at Lys-661.

It belongs to the ATP-dependent AMP-binding enzyme family. Monomer. Interacts with TFEB. AMPK-mediated phosphorylated form at Ser-659 interacts with KPNA1; this interaction results in nuclear translocation of ACSS2. Interacts with the 'Thr-172' phosphorylated form of PRKAA2. Interacts with CREBBP. In terms of processing, reversibly acetylated at Lys-661. The acetyl-CoA synthase activity is inhibited by acetylation and activated by deacetylation mediated by the deacetylases SIRT1 and SIRT3. As to expression, expressed in the hippocampus.

The protein resides in the cytoplasm. It is found in the cytosol. The protein localises to the nucleus. The catalysed reaction is acetate + ATP + CoA = acetyl-CoA + AMP + diphosphate. It carries out the reaction propanoate + ATP + CoA = propanoyl-CoA + AMP + diphosphate. Inhibited by acetylation at Lys-661 and activated by deacetylation mediated by the deacetylases SIRT1 and SIRT3. Functionally, catalyzes the synthesis of acetyl-CoA from short-chain fatty acids. Acetate is the preferred substrate but can also utilize propionate with a much lower affinity. Nuclear ACSS2 promotes glucose deprivation-induced lysosomal biogenesis and autophagy, tumor cell survival and brain tumorigenesis. Glucose deprivation results in AMPK-mediated phosphorylation of ACSS2 leading to its translocation to the nucleus where it binds to TFEB and locally produces acetyl-CoA for histone acetylation in the promoter regions of TFEB target genes thereby activating their transcription. The regulation of genes associated with autophagy and lysosomal activity through ACSS2 is important for brain tumorigenesis and tumor survival. Acts as a chromatin-bound transcriptional coactivator that up-regulates histone acetylation and expression of neuronal genes. Can be recruited to the loci of memory-related neuronal genes to maintain a local acetyl-CoA pool, providing the substrate for histone acetylation and promoting the expression of specific genes, which is essential for maintaining long-term spatial memory. The protein is Acetyl-coenzyme A synthetase, cytoplasmic (Acss2) of Mus musculus (Mouse).